Reading from the N-terminus, the 486-residue chain is Shugoshin-1 (486 aa).

Positions 71-154 form a coiled coil; that stretch reads IEVSRVELQK…QNRAKILEKK (84 aa). Disordered regions lie at residues 137–163, 187–209, 222–251, 323–346, 382–403, and 418–467; these read MSKT…CAPT, YTSC…RKSE, HSCR…ARLN, AGSS…PRKS, PIQH…DPGP, and TVAP…SRRA. A compositionally biased stretch (basic and acidic residues) spans 331-346; it reads EAHKFDIEDPEPPRKS. A compositionally biased stretch (basic residues) spans 387 to 396; the sequence is QKRKLSRRKS. The span at 423–433 shows a compositional bias: polar residues; sequence APSSSNALIEQ.

The protein belongs to the shugoshin family. As to expression, highly expressed in roots. Expressed in panicles. Expressed at low levels in leaves.

Its subcellular location is the nucleus. The protein resides in the nucleolus. The protein localises to the chromosome. It localises to the centromere. Its function is as follows. Plays a central role in chromosome cohesion during meiosis I by preventing premature dissociation of cohesin complex from centromeres after prophase, when most of cohesin complex dissociates from chromosomes arms. Required for the timely assembly and maintenance of synaptonemal complex (SC) during early prophase I. Required for maintenance of centromeric cohesion before prophase II and correct segregation of chromatids during meiosis II. Has apparently no function in mitosis. The sequence is that of Shugoshin-1 from Oryza sativa subsp. japonica (Rice).